The sequence spans 267 residues: Regulatory protein RecX (267 aa).

It belongs to the RecX family.

It localises to the cytoplasm. In terms of biological role, modulates RecA activity. This chain is Regulatory protein RecX, found in Staphylococcus carnosus (strain TM300).